Here is a 123-residue protein sequence, read N- to C-terminus: Large ribosomal subunit protein uL14 (123 aa).

The protein belongs to the universal ribosomal protein uL14 family. In terms of assembly, part of the 50S ribosomal subunit. Forms a cluster with proteins L3 and L19. In the 70S ribosome, L14 and L19 interact and together make contacts with the 16S rRNA in bridges B5 and B8.

In terms of biological role, binds to 23S rRNA. Forms part of two intersubunit bridges in the 70S ribosome. The protein is Large ribosomal subunit protein uL14 of Blochmanniella floridana.